Here is a 418-residue protein sequence, read N- to C-terminus: Serine hydroxymethyltransferase (418 aa).

(6S)-5,6,7,8-tetrahydrofolate is bound by residues L121 and 125–127 (GHL). The residue at position 230 (K230) is an N6-(pyridoxal phosphate)lysine. 355–357 (SPF) lines the (6S)-5,6,7,8-tetrahydrofolate pocket.

The protein belongs to the SHMT family. Homodimer. Pyridoxal 5'-phosphate serves as cofactor.

It is found in the cytoplasm. It catalyses the reaction (6R)-5,10-methylene-5,6,7,8-tetrahydrofolate + glycine + H2O = (6S)-5,6,7,8-tetrahydrofolate + L-serine. It functions in the pathway one-carbon metabolism; tetrahydrofolate interconversion. The protein operates within amino-acid biosynthesis; glycine biosynthesis; glycine from L-serine: step 1/1. Catalyzes the reversible interconversion of serine and glycine with tetrahydrofolate (THF) serving as the one-carbon carrier. This reaction serves as the major source of one-carbon groups required for the biosynthesis of purines, thymidylate, methionine, and other important biomolecules. Also exhibits THF-independent aldolase activity toward beta-hydroxyamino acids, producing glycine and aldehydes, via a retro-aldol mechanism. The polypeptide is Serine hydroxymethyltransferase (Streptococcus agalactiae serotype III (strain NEM316)).